The chain runs to 500 residues: MTNQDVVMPDIAAAAAMPGSSGRAPLFACRGAAAVSASSMLGGGGAAYQAAVVAHVAPVPAIRPCASWVVEAMRASSPTRPAAAAVDAEYDAWTQRKHPSALGSFEQVAAAASGKRVVVFLDYDGTLSPIVADPDMAFMSDEMRAAVRDVAEHFPAAIVTGRCVDKVQSFVGLPELYYAGSHGMDIKGPSSNEEEDTKILLQPAREFLPVINKAYKALMEKTKSTPGARVENNKFCLSVHFRCVDEKRWNPLAEQVKAVLRDYPELKLTQGRKVLEIRPSIMWDKGKAVEFLLKSLGFDDDRRDVLPVYIGDDRTDEDAFKVLRKRGQGLGILVSKCAKETDASYSLQDPAEKYTNAGAHVFVTMLLTVVFTAAVALALVNAVNSHDFAAHLAGVDCRMGLAGPVRCPASGFVELLVLALHVVRCVLAILDRLHACLMSPSLQLSIASPCHGVPCSIGAVEASAIIVSDAPEGLISTLTTDHIYYMTVFPAKLALTSEEV.

Belongs to the trehalose phosphatase family. The cofactor is a divalent metal cation.

The catalysed reaction is alpha,alpha-trehalose 6-phosphate + H2O = alpha,alpha-trehalose + phosphate. The protein operates within glycan biosynthesis; trehalose biosynthesis. In terms of biological role, removes the phosphate from trehalose 6-phosphate to produce free trehalose. Trehalose accumulation in plant may improve abiotic stress tolerance. This chain is Probable trehalose-phosphate phosphatase 8 (TPP8), found in Oryza sativa subsp. japonica (Rice).